The sequence spans 1159 residues: MVDFLAENNLCGQAILRIVSRGNAIIAELLRLSEFVPSVFRLKDKADQQKYGDIIFDFSYFKGPEVCEGRLEAKPELQDLDEEFRENNIEILTRFYLAFESVHKYIVDLNRYLEDLNEGIYIQQTLETVLLNEDGKQLLCEALYLYGVMLLVIDQKIEGEVRERMLVAYYRYSAARSSVDSNMDDICKLLRSTGYSSQPGAKRPPNYPESYFSRVPISETFISMVIGRLRSDDIYNQVSAYPLPEHRSTALATQAAILYVILYFHPPTLHTHQAKMREIVDKYFPDNWVISIYMGITVNLMEVWEPYKAAKTALNYTLDLPNIKEQASRYAKIIESLHPQVQQFLKEGFLREEFVLDNIPKLLNCLRDCNVAIRWLMLHTADSAYDPNNKRLRQVKDQVLADSKYNPKILFQLLLDTAQFEFLLKEMFKQMLSEKQNKWESYKKEGSERMTELADVFSGVKPLTRVEKNEHLQAWFREIAKQIHSLNYDDSTAAGRKTVQLIQALEEVQEFHQLETNLQVCQFLADTRKFLHQMIRTINIKEEVLITMQIVGDLSYAWQLIDSFTAIMQESIRANPSMVTKLRATFLKLASALDLPLLRINQANSPDLLSVSQYYSGELVFYVRKVLQIIPESMFTSLAKIIKLQTHDIIEVPTRLDKDKLRDYAQLGARYEVAKLTNAISIFTEGILMMKTTLVGIIKVDPKQLLEDGIRKELVKRVAVALHKGLIFNSRAKPSELLPKLKDMAATMDGFHRSFEYIQDYVSIYGLKIWQEEVSRIVNYNVEQECNNFLRTKIQDWQSMYQSTHIPIPKFPPVDESMTFIGRLCREILRITDPKVTCYIDQMNTWYDMKTHQEVTNNHLFSEINDSLGTFGLNGLDRLLCFMIVKELQNFIRLYQRLILRDKSGQETLRALQKVVTPVKGIVANSAKIYSAAIAKTQKIWPAYLDAIMKVGQMQVLRQQIANELNYSCKFDSKHLAGALENFNEAILADIQAHYQDPSLPCPREDNTLLYEITAYLEAAGTHNPLNKIYITTKQLSFFPIVNFLFLVAQLPKLQYNKNLGMTCRKPADPIDWVPLVLGLLTLLKQFHSRYTEQFLALIGQFIRSSLEQSTSQKIPEMPADVVGALMFLEDYVHFAKLPRRVVEAHVPNFIFDEFRTIQ.

Belongs to the strumpellin family. As to quaternary structure, component of the WASH complex.

The protein localises to the early endosome. Acts at least in part as component of the WASH complex which seems to regulate washc1 nucleation-promoting factor (NPF) activity and is required for its membrane targeting during endosomal sorting. This chain is WASH complex subunit 5, found in Xenopus tropicalis (Western clawed frog).